A 1038-amino-acid polypeptide reads, in one-letter code: Zinc finger protein 628 (1038 aa).

The segment at 1 to 31 (MAGSHVDMAPASTTEGTGEKPGPTAPAPTPA) is disordered. The span at 13 to 22 (TTEGTGEKPG) shows a compositional bias: low complexity. C2H2-type zinc fingers lie at residues 34–56 (YECG…QRTH), 62–84 (YKCP…QRGH), 90–112 (YQCP…RSVH), 118–140 (FTCG…LRQH), 146–168 (YPCP…RHVH), and 174–196 (YTCG…QRVH). Residue Thr197 is modified to Phosphothreonine. Residues 202-224 (FRCPLCPKTFTHSSNLLLHHRTH) form a C2H2-type 7 zinc finger. 2 disordered regions span residues 220–242 (HHRT…ETSR) and 254–273 (LQPR…PPVV). Composition is skewed to pro residues over residues 227 to 237 (APGPAPAPAPP) and 257 to 273 (RSPP…PPVV). C2H2-type zinc fingers lie at residues 346–368 (FACL…QHSH), 376–398 (FRCG…QQCH), 446–468 (YKCA…LRDH), 474–496 (YQCG…QRVH), 502–524 (FTCG…LRLH), 530–552 (YACT…RHVH), and 558–580 (HSCS…QRVH). Thr581 is subject to Phosphothreonine. C2H2-type zinc fingers lie at residues 586-608 (FRCP…QRTH) and 614-636 (FACP…LRTH). 2 disordered regions span residues 637–661 (TPAT…LAAA) and 717–763 (PSSV…AGQG). The segment covering 723–733 (PTPPPPPPPPK) has biased composition (pro residues). Low complexity predominate over residues 734–756 (VILLPPASAGGPGSGAARPGPRS). 4 repeat units span residues 811–821 (VQLQPAQEVAT), 822–832 (VQLQPAQEVTT), 833–843 (VQLQPAQEVTT), and 844–854 (VQLQPLTGQVS). Positions 811 to 854 (VQLQPAQEVATVQLQPAQEVTTVQLQPAQEVTTVQLQPLTGQVS) are 4 X 11 AA tandem repeats of VQLQP-[AL]-[QT]-[EG]-[VQ]-[ATV]-[ST]. The interval 922–1038 (DGEQTRLCVQ…LPAVQLVHTF (117 aa)) is interaction with TAF4B.

As to quaternary structure, interacts with TAF4B. Expressed widely in testis, in both germline and somatic cells. Seems to have particularly strong expression in meiotic spermatocytes, postmeiotic round spermatids and Sertoli cells. Not detected in elongating spermatids or mature sperm (at protein level). Expressed in testis, ovary, spleen, lung, brain, liver and kidney. Expressed in D3 embryonic stem cells and F9 embryonal carcinoma cells.

The protein localises to the nucleus. Transcriptional activator. Binds DNA on GT-box consensus sequence 5'-TTGGTT-3'. Plays a role in spermiogenesis. In Mus musculus (Mouse), this protein is Zinc finger protein 628.